Reading from the N-terminus, the 343-residue chain is MTDEPLVLGIETSCDETGVGVVRGRTLLANEIASSVDLHARFGGVVPEVASRAHLEALVPTMHRALEKAGLRLADVDAIAVTAGPGLAGTLLVGVAAAKAYALALGKPLFGVNHLAAHVAVDILEHGPLPRPCVALLVSGGHSSLLLVEDVTGTVRPLGSTVDDAAGEAFDKVARVLGLPFPGGPPIDRAAQEGDPQFVAFPRGKADDGTFDFSFAGLKTAVARWVEKRERDGEPVPVADVAAAFQEAVADVLTAKAVAACRTYGVGDLLIGGGVAANSRLRSLAAERCEAAGIRLRVPRPGLCTDNGAMVAALGACLIKAGRTPSEPEFPADSSLPITEVLV.

Residues histidine 114 and histidine 118 each coordinate Fe cation. Substrate-binding positions include 137–141, aspartate 171, glycine 184, aspartate 188, and asparagine 278; that span reads LVSGG. Residue aspartate 306 coordinates Fe cation.

It belongs to the KAE1 / TsaD family. The cofactor is Fe(2+).

The protein resides in the cytoplasm. It carries out the reaction L-threonylcarbamoyladenylate + adenosine(37) in tRNA = N(6)-L-threonylcarbamoyladenosine(37) in tRNA + AMP + H(+). In terms of biological role, required for the formation of a threonylcarbamoyl group on adenosine at position 37 (t(6)A37) in tRNAs that read codons beginning with adenine. Is involved in the transfer of the threonylcarbamoyl moiety of threonylcarbamoyl-AMP (TC-AMP) to the N6 group of A37, together with TsaE and TsaB. TsaD likely plays a direct catalytic role in this reaction. The polypeptide is tRNA N6-adenosine threonylcarbamoyltransferase (Acidothermus cellulolyticus (strain ATCC 43068 / DSM 8971 / 11B)).